A 266-amino-acid polypeptide reads, in one-letter code: Hydroxyethylthiazole kinase (266 aa).

Residue Met44 participates in substrate binding. ATP contacts are provided by Lys120 and Thr166. Gly193 contacts substrate.

Belongs to the Thz kinase family. Mg(2+) is required as a cofactor.

It carries out the reaction 5-(2-hydroxyethyl)-4-methylthiazole + ATP = 4-methyl-5-(2-phosphooxyethyl)-thiazole + ADP + H(+). It participates in cofactor biosynthesis; thiamine diphosphate biosynthesis; 4-methyl-5-(2-phosphoethyl)-thiazole from 5-(2-hydroxyethyl)-4-methylthiazole: step 1/1. Functionally, catalyzes the phosphorylation of the hydroxyl group of 4-methyl-5-beta-hydroxyethylthiazole (THZ). This chain is Hydroxyethylthiazole kinase, found in Syntrophomonas wolfei subsp. wolfei (strain DSM 2245B / Goettingen).